The primary structure comprises 275 residues: Glucosamine-6-phosphate deaminase 2 (275 aa).

The active-site Proton acceptor; for enolization step is aspartate 72. A coiled-coil region spans residues 102–131 (NNAHILDGNASDLQAECEDFERKIKEAGGI). The active-site For ring-opening step is aspartate 141. Residue histidine 143 is the Proton acceptor; for ring-opening step of the active site. Catalysis depends on glutamate 148, which acts as the For ring-opening step.

This sequence belongs to the glucosamine/galactosamine-6-phosphate isomerase family. Homohexamer.

The protein localises to the cytoplasm. It catalyses the reaction alpha-D-glucosamine 6-phosphate + H2O = beta-D-fructose 6-phosphate + NH4(+). Catalyzes the reversible conversion of alpha-D-glucosamine 6-phosphate (GlcN-6P) into beta-D-fructose 6-phosphate (Fru-6P) and ammonium ion, a regulatory reaction step in de novo uridine diphosphate-N-acetyl-alpha-D-glucosamine (UDP-GlcNAc) biosynthesis via hexosamine pathway. The protein is Glucosamine-6-phosphate deaminase 2 of Xenopus laevis (African clawed frog).